Reading from the N-terminus, the 453-residue chain is Calcium-binding tyrosine phosphorylation-regulated protein (453 aa).

Residues tyrosine 12 to glutamate 49 enclose the RIIa domain. Disordered regions lie at residues proline 86 to alanine 165, proline 246 to serine 278, and isoleucine 406 to valine 453. Over residues aspartate 143–proline 154 the composition is skewed to low complexity.

In terms of assembly, interacts with FSCB. Post-translationally, phosphorylated on tyrosine residues during in vitro capacitation. Dephosphorylation affects its ability to bind calcium. As to expression, expressed in spermatozoa.

The protein resides in the cytoplasm. It is found in the cytoskeleton. The protein localises to the cell projection. Its subcellular location is the cilium. It localises to the flagellum. Functionally, may function as a regulator of both motility- and head-associated functions such as capacitation and the acrosome reaction. May bind calcium in vitro. This chain is Calcium-binding tyrosine phosphorylation-regulated protein (Cabyr), found in Mus musculus (Mouse).